We begin with the raw amino-acid sequence, 637 residues long: Early transcription factor 70 kDa subunit (637 aa).

One can recognise a Helicase ATP-binding domain in the interval 32–185 (RTIIDENRSV…GHIIDLMSEE (154 aa)). 45–52 (HIMGSGKT) is a binding site for ATP. The DEXH box signature appears at 135–138 (DKAH). One can recognise a Helicase C-terminal domain in the interval 327–507 (KFKYFINRIQ…VLPFDIKKLL (181 aa)).

This sequence belongs to the helicase family. VETF subfamily. Heterodimer of a 70 kDa and a 82 kDa subunit. Part of the early transcription complex composed of ETF, RAP94/OPG109, and the DNA-directed RNA polymerase.

The protein localises to the virion. Acts with RNA polymerase to initiate transcription from early gene promoters. Is recruited by the RPO-associated protein of 94 kDa RAP94/OPG109 to form the early transcription complex, which also contains the core RNA polymerase. ETF heterodimer binds to early gene promoters. The polypeptide is Early transcription factor 70 kDa subunit (OPG118) (Homo sapiens (Human)).